The sequence spans 209 residues: FMN-dependent NADH:quinone oxidoreductase (209 aa).

Residues S9 and 15 to 17 contribute to the FMN site; that span reads SNS.

The protein belongs to the azoreductase type 1 family. In terms of assembly, homodimer. Requires FMN as cofactor.

It carries out the reaction 2 a quinone + NADH + H(+) = 2 a 1,4-benzosemiquinone + NAD(+). The catalysed reaction is N,N-dimethyl-1,4-phenylenediamine + anthranilate + 2 NAD(+) = 2-(4-dimethylaminophenyl)diazenylbenzoate + 2 NADH + 2 H(+). Its function is as follows. Quinone reductase that provides resistance to thiol-specific stress caused by electrophilic quinones. Also exhibits azoreductase activity. Catalyzes the reductive cleavage of the azo bond in aromatic azo compounds to the corresponding amines. In Bordetella parapertussis (strain 12822 / ATCC BAA-587 / NCTC 13253), this protein is FMN-dependent NADH:quinone oxidoreductase.